The primary structure comprises 501 residues: LIM domain-containing protein HDR3 (501 aa).

The tract at residues 33–67 (GEANRRRPRVTAGEETTLWEEPVRPKKEEPPRHNN) is disordered. The segment covering 53 to 67 (EPVRPKKEEPPRHNN) has biased composition (basic and acidic residues). 2 UIM domains span residues 65-84 (HNNE…DAKN) and 94-113 (ENDE…NPYQ). Residues 131–191 (RVCGGCKHEI…KLCYKELHHP (61 aa)) form the LIM zinc-binding domain. Positions 429–448 (YASSSSSSCRPPPSKKGGIS) are disordered.

As to quaternary structure, interacts (via N-terminus) with GW6A (via C-terminus).

Functionally, ubiquitin receptor that functions as a positive regulator of grain size and weight. Functions in the same genetic pathway as GW6A to regulate grain size. Modulates grain size in a similar manner to GW6A, by altering cell proliferation in spikelet hulls. Interacts with and enhances the ubiquitination of GW6A. This stabilizes GW6A, delays protein degradation by the 26S proteasome and enhances GW6A histone acetyltransferase activity. The protein is LIM domain-containing protein HDR3 of Oryza sativa subsp. japonica (Rice).